Here is a 367-residue protein sequence, read N- to C-terminus: Phospho-N-acetylmuramoyl-pentapeptide-transferase (367 aa).

The next 10 membrane-spanning stretches (helical) occupy residues 28-48 (GALMTAMLIAFVFGKPMIGWL), 75-95 (TMGGFLILLGVMVGTLLWADL), 96-116 (TNAYVWIVIFVTAGFGVIGFI), 134-154 (FKLVGEFAIALIAVVWATHTA), 175-195 (LMINIGPLFFVFGCVVIVGSG), 206-226 (GLAIVPVMIAAATFGVIAYVV), 243-263 (AGEILIFCGALIGAGIGFLWW), 271-291 (FMGDTGSLSLGGALGTIAVAI), 295-315 (LVLAIVGGLFVLELVSVMVQV), and 344-364 (TIVIRFWIIAVILALIGLATL).

The protein belongs to the glycosyltransferase 4 family. MraY subfamily. The cofactor is Mg(2+).

The protein resides in the cell inner membrane. The enzyme catalyses UDP-N-acetyl-alpha-D-muramoyl-L-alanyl-gamma-D-glutamyl-meso-2,6-diaminopimeloyl-D-alanyl-D-alanine + di-trans,octa-cis-undecaprenyl phosphate = di-trans,octa-cis-undecaprenyl diphospho-N-acetyl-alpha-D-muramoyl-L-alanyl-D-glutamyl-meso-2,6-diaminopimeloyl-D-alanyl-D-alanine + UMP. Its pathway is cell wall biogenesis; peptidoglycan biosynthesis. Functionally, catalyzes the initial step of the lipid cycle reactions in the biosynthesis of the cell wall peptidoglycan: transfers peptidoglycan precursor phospho-MurNAc-pentapeptide from UDP-MurNAc-pentapeptide onto the lipid carrier undecaprenyl phosphate, yielding undecaprenyl-pyrophosphoryl-MurNAc-pentapeptide, known as lipid I. This chain is Phospho-N-acetylmuramoyl-pentapeptide-transferase, found in Maricaulis maris (strain MCS10) (Caulobacter maris).